Here is a 330-residue protein sequence, read N- to C-terminus: Phosphate acyltransferase (330 aa).

It belongs to the PlsX family. As to quaternary structure, homodimer. Probably interacts with PlsY.

It is found in the cytoplasm. It carries out the reaction a fatty acyl-[ACP] + phosphate = an acyl phosphate + holo-[ACP]. It functions in the pathway lipid metabolism; phospholipid metabolism. Its function is as follows. Catalyzes the reversible formation of acyl-phosphate (acyl-PO(4)) from acyl-[acyl-carrier-protein] (acyl-ACP). This enzyme utilizes acyl-ACP as fatty acyl donor, but not acyl-CoA. The protein is Phosphate acyltransferase of Lactobacillus delbrueckii subsp. bulgaricus (strain ATCC BAA-365 / Lb-18).